A 724-amino-acid polypeptide reads, in one-letter code: Probable protein phosphatase 2C 62 (724 aa).

The segment at Asp-357–Asn-385 is disordered. The segment covering Ala-365 to Ala-374 has biased composition (basic and acidic residues). One can recognise a PPM-type phosphatase domain in the interval Asp-482–Val-719. Mn(2+) contacts are provided by Asp-514, Gly-515, Asp-643, and Asp-710.

This sequence belongs to the PP2C family. It depends on Mg(2+) as a cofactor. The cofactor is Mn(2+).

It carries out the reaction O-phospho-L-seryl-[protein] + H2O = L-seryl-[protein] + phosphate. The catalysed reaction is O-phospho-L-threonyl-[protein] + H2O = L-threonyl-[protein] + phosphate. In Arabidopsis thaliana (Mouse-ear cress), this protein is Probable protein phosphatase 2C 62.